The following is a 317-amino-acid chain: Methionyl-tRNA formyltransferase (317 aa).

112–115 is a binding site for (6S)-5,6,7,8-tetrahydrofolate; sequence SLLP.

This sequence belongs to the Fmt family.

The catalysed reaction is L-methionyl-tRNA(fMet) + (6R)-10-formyltetrahydrofolate = N-formyl-L-methionyl-tRNA(fMet) + (6S)-5,6,7,8-tetrahydrofolate + H(+). Its function is as follows. Attaches a formyl group to the free amino group of methionyl-tRNA(fMet). The formyl group appears to play a dual role in the initiator identity of N-formylmethionyl-tRNA by promoting its recognition by IF2 and preventing the misappropriation of this tRNA by the elongation apparatus. The protein is Methionyl-tRNA formyltransferase of Geobacter sulfurreducens (strain ATCC 51573 / DSM 12127 / PCA).